An 809-amino-acid chain; its full sequence is Probable replication endonuclease from prophage-like region (809 aa).

Active-site O-(5'-phospho-DNA)-tyrosine intermediate residues include Y503 and Y507.

The protein belongs to the phage GPA family.

Functionally, possible endonuclease which induces a single-strand cut and initiates DNA replication. The sequence is that of Probable replication endonuclease from prophage-like region from Salmonella typhimurium (strain LT2 / SGSC1412 / ATCC 700720).